The following is a 413-amino-acid chain: Arginine biosynthesis bifunctional protein ArgJ (413 aa).

Residues threonine 158, lysine 184, threonine 195, glutamate 285, asparagine 408, and serine 413 each contribute to the substrate site. The active-site Nucleophile is the threonine 195.

It belongs to the ArgJ family. In terms of assembly, heterotetramer of two alpha and two beta chains.

It is found in the cytoplasm. It carries out the reaction N(2)-acetyl-L-ornithine + L-glutamate = N-acetyl-L-glutamate + L-ornithine. It catalyses the reaction L-glutamate + acetyl-CoA = N-acetyl-L-glutamate + CoA + H(+). It participates in amino-acid biosynthesis; L-arginine biosynthesis; L-ornithine and N-acetyl-L-glutamate from L-glutamate and N(2)-acetyl-L-ornithine (cyclic): step 1/1. It functions in the pathway amino-acid biosynthesis; L-arginine biosynthesis; N(2)-acetyl-L-ornithine from L-glutamate: step 1/4. Functionally, catalyzes two activities which are involved in the cyclic version of arginine biosynthesis: the synthesis of N-acetylglutamate from glutamate and acetyl-CoA as the acetyl donor, and of ornithine by transacetylation between N(2)-acetylornithine and glutamate. In Agrobacterium fabrum (strain C58 / ATCC 33970) (Agrobacterium tumefaciens (strain C58)), this protein is Arginine biosynthesis bifunctional protein ArgJ.